The primary structure comprises 994 residues: Translation initiation factor IF-2 (994 aa).

Polar residues-rich tracts occupy residues 1-10 and 28-40; these read MSDENNNGRN and SVSSGTVKQSFSH. Residues 1–405 are disordered; the sequence is MSDENNNGRN…REKRKGGAQE (405 aa). A compositionally biased stretch (low complexity) spans 76-91; the sequence is PQKPAGPAQAPRAPQG. Basic and acidic residues predominate over residues 98–131; that stretch reads AEERAARQRAIELARQQEADRRAREERARAEAEA. Over residues 132–146 the composition is skewed to low complexity; the sequence is ARAAQQKAAQAAAEP. Positions 147-157 are enriched in pro residues; it reads PAAPPPAPAAP. Positions 158–172 are enriched in low complexity; the sequence is PAAAAPAAPAAEAAP. Positions 173-188 are enriched in pro residues; sequence APKPAPSPRPVPPSAP. Over residues 189 to 204 the composition is skewed to low complexity; sequence APQAARPAAEAPPRQA. 2 stretches are compositionally biased toward basic and acidic residues: residues 216–235 and 247–273; these read PDRRDDRPSTTTYRPERPSN and PRRDDDRGPRPPRRDDDRGPRRDDRPQ. Gly residues predominate over residues 298–310; sequence RGPGGPRGPGGPR. Composition is skewed to basic and acidic residues over residues 336–350 and 390–402; these read VDRRPDEDDRRRDPG and RAREREREKRKGG. A tr-type G domain is found at 492 to 662; sequence PRPPVVAVMG…LLQAEVLDLK (171 aa). The G1 stretch occupies residues 501-508; it reads GHVDHGKT. 501–508 provides a ligand contact to GTP; it reads GHVDHGKT. Residues 526 to 530 form a G2 region; that stretch reads GITQH. Residues 548–551 form a G3 region; that stretch reads DTPG. GTP contacts are provided by residues 548–552 and 602–605; these read DTPGH and NKID. The interval 602-605 is G4; sequence NKID. Residues 638–640 are G5; sequence SAT.

Belongs to the TRAFAC class translation factor GTPase superfamily. Classic translation factor GTPase family. IF-2 subfamily.

The protein localises to the cytoplasm. One of the essential components for the initiation of protein synthesis. Protects formylmethionyl-tRNA from spontaneous hydrolysis and promotes its binding to the 30S ribosomal subunits. Also involved in the hydrolysis of GTP during the formation of the 70S ribosomal complex. The sequence is that of Translation initiation factor IF-2 from Phenylobacterium zucineum (strain HLK1).